The chain runs to 251 residues: GTP cyclohydrolase 1 type 2 homolog (251 aa).

Residues histidine 63, histidine 64, aspartate 101, histidine 219, and glutamate 223 each coordinate a divalent metal cation.

This sequence belongs to the GTP cyclohydrolase I type 2/NIF3 family. As to quaternary structure, toroid-shaped homohexamer. In the hexamer, 3 dimers assemble to form a ring-like structure surrounding a central hole.

This is GTP cyclohydrolase 1 type 2 homolog from Haemophilus influenzae (strain ATCC 51907 / DSM 11121 / KW20 / Rd).